The following is a 97-amino-acid chain: UPF0147 protein MA_0092 (97 aa).

Belongs to the UPF0147 family.

The chain is UPF0147 protein MA_0092 from Methanosarcina acetivorans (strain ATCC 35395 / DSM 2834 / JCM 12185 / C2A).